Here is a 164-residue protein sequence, read N- to C-terminus: Crossover junction endodeoxyribonuclease RuvC (164 aa).

Catalysis depends on residues D7, E67, and D139. Mg(2+) contacts are provided by D7, E67, and D139.

This sequence belongs to the RuvC family. In terms of assembly, homodimer which binds Holliday junction (HJ) DNA. The HJ becomes 2-fold symmetrical on binding to RuvC with unstacked arms; it has a different conformation from HJ DNA in complex with RuvA. In the full resolvosome a probable DNA-RuvA(4)-RuvB(12)-RuvC(2) complex forms which resolves the HJ. Mg(2+) is required as a cofactor.

The protein localises to the cytoplasm. It catalyses the reaction Endonucleolytic cleavage at a junction such as a reciprocal single-stranded crossover between two homologous DNA duplexes (Holliday junction).. Functionally, the RuvA-RuvB-RuvC complex processes Holliday junction (HJ) DNA during genetic recombination and DNA repair. Endonuclease that resolves HJ intermediates. Cleaves cruciform DNA by making single-stranded nicks across the HJ at symmetrical positions within the homologous arms, yielding a 5'-phosphate and a 3'-hydroxyl group; requires a central core of homology in the junction. The consensus cleavage sequence is 5'-(A/T)TT(C/G)-3'. Cleavage occurs on the 3'-side of the TT dinucleotide at the point of strand exchange. HJ branch migration catalyzed by RuvA-RuvB allows RuvC to scan DNA until it finds its consensus sequence, where it cleaves and resolves the cruciform DNA. In Geobacter sp. (strain M21), this protein is Crossover junction endodeoxyribonuclease RuvC.